Here is a 687-residue protein sequence, read N- to C-terminus: Polyphosphate kinase (687 aa).

Asparagine 45 provides a ligand contact to ATP. Positions 375 and 405 each coordinate Mg(2+). Catalysis depends on histidine 435, which acts as the Phosphohistidine intermediate. Residues tyrosine 472, arginine 568, and histidine 596 each contribute to the ATP site.

Belongs to the polyphosphate kinase 1 (PPK1) family. The cofactor is Mg(2+). In terms of processing, an intermediate of this reaction is the autophosphorylated ppk in which a phosphate is covalently linked to a histidine residue through a N-P bond.

The enzyme catalyses [phosphate](n) + ATP = [phosphate](n+1) + ADP. Catalyzes the reversible transfer of the terminal phosphate of ATP to form a long-chain polyphosphate (polyP). In Burkholderia multivorans (strain ATCC 17616 / 249), this protein is Polyphosphate kinase.